Reading from the N-terminus, the 41-residue chain is Large ribosomal subunit protein bL36 (41 aa).

This sequence belongs to the bacterial ribosomal protein bL36 family.

The sequence is that of Large ribosomal subunit protein bL36 from Jannaschia sp. (strain CCS1).